Here is a 518-residue protein sequence, read N- to C-terminus: Arp2/3 complex-activating protein rickA (518 aa).

Residues 310-518 (SAAQLQSAET…ERNAKQSQQR (209 aa)) form a disordered region. 2 stretches are compositionally biased toward pro residues: residues 344–354 (TPPPAPPPPMP) and 382–401 (VPPP…PPPV). The span at 418–430 (QPRPAVDTTNLMK) shows a compositional bias: polar residues. The 18-residue stretch at 424–441 (DTTNLMKQIQGGFNLKKI) folds into the WH2 domain. Positions 439 to 461 (KKIEYGEDGKPIPKNKEDTKETS) are enriched in basic and acidic residues. Residues 488–498 (GTDSGWASDVS) show a composition bias toward polar residues.

Homodimer.

The protein localises to the cell surface. In terms of biological role, recruits and activates the Arp2/3 complex, which in turn leads to actin polymerization, promoting Rickettsia motility during infection. The chain is Arp2/3 complex-activating protein rickA (rickA) from Rickettsia bellii (strain RML369-C).